A 358-amino-acid polypeptide reads, in one-letter code: Probable D-xylulose reductase A (358 aa).

Residues Cys-47, His-72, and Glu-73 each coordinate Zn(2+). 182–187 (GAGPVG) contributes to the NAD(+) binding site.

This sequence belongs to the zinc-containing alcohol dehydrogenase family. The cofactor is Zn(2+).

It catalyses the reaction xylitol + NAD(+) = D-xylulose + NADH + H(+). The protein operates within carbohydrate degradation; L-arabinose degradation via L-arabinitol; D-xylulose 5-phosphate from L-arabinose (fungal route): step 4/5. Xylitol dehydrogenase which catalyzes the conversion of xylitol to D-xylulose. Xylose is a major component of hemicelluloses such as xylan. Most fungi utilize D-xylose via three enzymatic reactions, xylose reductase (XR), xylitol dehydrogenase (XDH), and xylulokinase, to form xylulose 5-phosphate, which enters pentose phosphate pathway. The polypeptide is Probable D-xylulose reductase A (xdhA) (Neosartorya fischeri (strain ATCC 1020 / DSM 3700 / CBS 544.65 / FGSC A1164 / JCM 1740 / NRRL 181 / WB 181) (Aspergillus fischerianus)).